Here is a 373-residue protein sequence, read N- to C-terminus: Secondary metabolism regulator laeA (373 aa).

The interval 55–81 (ERDPAAGRWHANGSPSINSTSSKNPDR) is disordered. The segment covering 67 to 77 (GSPSINSTSSK) has biased composition (polar residues).

The protein belongs to the methyltransferase superfamily. LaeA methyltransferase family. Component of the heterotrimeric velvet complex composed of laeA, veA and velB; VeA acting as a bridging protein between laeA and velB.

The protein localises to the nucleus. The catalysed reaction is L-methionyl-[protein] + S-adenosyl-L-methionine = S-methyl-L-methionyl-[protein] + S-adenosyl-L-homocysteine. Methyltransferase that performs automethylation. No other methyl-accepting substrate has been identified yet. Component of the velvet transcription factor complex that acts as a global regulator for secondary metabolite gene expression. Positively controls expression of 20% to 40% of major classes of secondary metabolite biosynthesis genes such as nonribosomal peptide synthetases, polyketide synthases, and P450 monooxygenases. Controls the expression of the gliotoxin gene cluster. Controls the expression of the fumitremorgin, fumagillin, and pseurotin gene clusters, where genes for fumagillin and pseurotin are physically intertwined in a single supercluster. Regulates the biosynthetic genes required for endocrocin production. Secondary metabolites under the transcriptional regulation of laeA are necessary for inhibition of angiogenesis during invasive infection in mice. Controls the expression of cell surface rodA, a hydrophobin that acts as an antiphagocytic molecule. Also regulates the expression of genes involved in conidial biosynthesis. The chain is Secondary metabolism regulator laeA from Aspergillus fumigatus (strain ATCC MYA-4609 / CBS 101355 / FGSC A1100 / Af293) (Neosartorya fumigata).